We begin with the raw amino-acid sequence, 868 residues long: Hopanoid transporter HpnN (868 aa).

A run of 12 helical transmembrane segments spans residues 16–36 (FAAFTVLIGVFLAVAAGFYTY), 273–293 (GAVVNGIGTVVVVLLILWMAL), 298–318 (IIFAVAANLVIGLSITTAVGL), 326–346 (LLSIAFAVLFVGLGVDFGIQF), 370–390 (YSAVPLSLAAMSTTAGFLSFL), 403–423 (IAGAGMAIAFFTSITVLPALL), 452–472 (IAIIVGTIGVALAGLPLLYFM), 710–730 (IVASFIQAGLWALLSISILLW), 740–760 (ALTLVPLLVAGAVTLEICVLI), 762–782 (LPLNFANIVALPLLLGVGVAF), 805–825 (AIFFSALTTATAFGSLWLSSH), and 834–854 (LLALSLLTTLGAVLLFQPALM). One can recognise an SSD domain in the interval 299 to 425 (IFAVAANLVI…ITVLPALLKL (127 aa)).

The protein belongs to the resistance-nodulation-cell division (RND) (TC 2.A.6) family. MmpL subfamily.

It is found in the cell inner membrane. Essential for hopanoid transport from the cytoplasmic to the outer membrane. Required for the C(35) hopanoid, bacteriohopanetetrol, to remain localized to the mother cell type. The chain is Hopanoid transporter HpnN from Rhodopseudomonas palustris (strain TIE-1).